A 348-amino-acid polypeptide reads, in one-letter code: Dihydroorotase (348 aa).

2 residues coordinate Zn(2+): histidine 17 and histidine 19. Substrate is bound by residues 19–21 and asparagine 45; that span reads HLR. Zn(2+) contacts are provided by lysine 103, histidine 140, and histidine 178. Residue lysine 103 is modified to N6-carboxylysine. Residue histidine 140 participates in substrate binding. Residue leucine 223 participates in substrate binding. Aspartate 251 is a binding site for Zn(2+). Residue aspartate 251 is part of the active site. Substrate is bound by residues histidine 255 and alanine 267.

The protein belongs to the metallo-dependent hydrolases superfamily. DHOase family. Class II DHOase subfamily. Homodimer. Zn(2+) is required as a cofactor.

It catalyses the reaction (S)-dihydroorotate + H2O = N-carbamoyl-L-aspartate + H(+). Its pathway is pyrimidine metabolism; UMP biosynthesis via de novo pathway; (S)-dihydroorotate from bicarbonate: step 3/3. Functionally, catalyzes the reversible cyclization of carbamoyl aspartate to dihydroorotate. This Shigella sonnei (strain Ss046) protein is Dihydroorotase.